The primary structure comprises 172 residues: Fimbrial-like protein FimF (172 aa).

Residues 1–21 (MILRRVFIAIGCVLFSPLSQA) form the signal peptide. A disulfide bond links Cys-41 and Cys-81.

The protein belongs to the fimbrial protein family.

It localises to the fimbrium. The polypeptide is Fimbrial-like protein FimF (fimF) (Salmonella typhimurium (strain LT2 / SGSC1412 / ATCC 700720)).